Reading from the N-terminus, the 122-residue chain is Acidic phospholipase A2 (122 aa).

7 cysteine pairs are disulfide-bonded: Cys26-Cys115, Cys28-Cys44, Cys43-Cys95, Cys49-Cys122, Cys50-Cys88, Cys57-Cys81, and Cys75-Cys86. Positions 27, 29, and 31 each coordinate Ca(2+). His47 is a catalytic residue. Asp48 contacts Ca(2+). Asp89 is a catalytic residue.

Belongs to the phospholipase A2 family. Group II subfamily. D49 sub-subfamily. The cofactor is Ca(2+). Post-translationally, contains 7 disulfide bonds. In terms of tissue distribution, expressed by the venom gland.

Its subcellular location is the secreted. The enzyme catalyses a 1,2-diacyl-sn-glycero-3-phosphocholine + H2O = a 1-acyl-sn-glycero-3-phosphocholine + a fatty acid + H(+). Its function is as follows. Snake venom phospholipase A2 (PLA2) that displays low systemic toxicity and causes severe symptoms only at very high concentrations (15 mg/kg). Has neither coagulant nor anticoagulant activity. PLA2 catalyzes the calcium-dependent hydrolysis of the 2-acyl groups in 3-sn-phosphoglycerides. This is Acidic phospholipase A2 from Bothrops ammodytoides (Yararanata).